A 430-amino-acid chain; its full sequence is PCI domain-containing protein 2 homolog (430 aa).

The PCI domain occupies 243-424; that stretch reads ITYRFFNGRL…ALVVSPTNPF (182 aa).

This sequence belongs to the CSN12 family.

The polypeptide is PCI domain-containing protein 2 homolog (pcid2) (Dictyostelium discoideum (Social amoeba)).